The chain runs to 113 residues: UPF0122 protein LCA_0713 (113 aa).

It belongs to the UPF0122 family.

Its function is as follows. Might take part in the signal recognition particle (SRP) pathway. This is inferred from the conservation of its genetic proximity to ftsY/ffh. May be a regulatory protein. This is UPF0122 protein LCA_0713 from Latilactobacillus sakei subsp. sakei (strain 23K) (Lactobacillus sakei subsp. sakei).